The primary structure comprises 256 residues: Acetyl-coenzyme A carboxylase carboxyl transferase subunit alpha (256 aa).

The CoA carboxyltransferase C-terminal domain occupies 1–236 (MTDVSRVLKE…KANLIEQITS (236 aa)).

It belongs to the AccA family. In terms of assembly, acetyl-CoA carboxylase is a heterohexamer composed of biotin carboxyl carrier protein (AccB), biotin carboxylase (AccC) and two subunits each of ACCase subunit alpha (AccA) and ACCase subunit beta (AccD).

The protein resides in the cytoplasm. It catalyses the reaction N(6)-carboxybiotinyl-L-lysyl-[protein] + acetyl-CoA = N(6)-biotinyl-L-lysyl-[protein] + malonyl-CoA. Its pathway is lipid metabolism; malonyl-CoA biosynthesis; malonyl-CoA from acetyl-CoA: step 1/1. Functionally, component of the acetyl coenzyme A carboxylase (ACC) complex. First, biotin carboxylase catalyzes the carboxylation of biotin on its carrier protein (BCCP) and then the CO(2) group is transferred by the carboxyltransferase to acetyl-CoA to form malonyl-CoA. This is Acetyl-coenzyme A carboxylase carboxyl transferase subunit alpha from Streptococcus pyogenes serotype M2 (strain MGAS10270).